The primary structure comprises 536 residues: Apolipoprotein N-acyltransferase (536 aa).

7 helical membrane-spanning segments follow: residues 10–30 (IASG…LLAG), 42–62 (AWPV…GSAA), 76–96 (WWFG…AFLV), 107–127 (AAIC…FALA), 136–158 (LRIL…LLTG), 181–201 (IGIW…AVLI), and 212–232 (AVPA…GIRL). A CN hydrolase domain is found at 248 to 501 (MQPNLPQDAR…EGVLDSGLPA (254 aa)). Glutamate 295 serves as the catalytic Proton acceptor. The active site involves lysine 360. Cysteine 413 functions as the Nucleophile in the catalytic mechanism. Residues 509–529 (ARVGELPAAVLVALVMMLVLL) traverse the membrane as a helical segment.

Belongs to the CN hydrolase family. Apolipoprotein N-acyltransferase subfamily.

Its subcellular location is the cell inner membrane. It catalyses the reaction N-terminal S-1,2-diacyl-sn-glyceryl-L-cysteinyl-[lipoprotein] + a glycerophospholipid = N-acyl-S-1,2-diacyl-sn-glyceryl-L-cysteinyl-[lipoprotein] + a 2-acyl-sn-glycero-3-phospholipid + H(+). It functions in the pathway protein modification; lipoprotein biosynthesis (N-acyl transfer). Catalyzes the phospholipid dependent N-acylation of the N-terminal cysteine of apolipoprotein, the last step in lipoprotein maturation. In Rhodopseudomonas palustris (strain ATCC BAA-98 / CGA009), this protein is Apolipoprotein N-acyltransferase.